Consider the following 395-residue polypeptide: MGIKHLYQIISENAPDAVKSGEIKNQFGRKVAIDASMSIYSFLIAVRSDGQQLMNESGETTSHLMGLFYRTLRMVDNGIKPLYVFDGAPPKLKSGELAKRIARKQEAAEQHEEAKETGTTEDVEKFSRRTVRVTREHNEECKKLLKLMGIPYINAPTEAEAQCAVLARAGKVYAAASEDMDTLCFDSPILLRHLTFSEQRKEPILEIHLDRVLEGLGMDRKTFVDLCILLGCDYLDPIPKVGPNTALKLIRDHGSLEKVVEAMKNDPKQKYTIPDDWPYEQARDLFFEPDVRPADHPECDFKWEAPDVEGLVKFLVEGKGFSEDRVRSGAARLQKNMKTAQQSRLEGFFKPVAKTDEEKASLKRKHEEKLEAAKKKKKEDAKAKREAKSRPKGTA.

The interval 1–104 is N-domain; the sequence is MGIKHLYQII…GELAKRIARK (104 aa). Asp-34 provides a ligand contact to Mg(2+). Residues Arg-47 and Arg-70 each coordinate DNA. Residue Asp-86 participates in Mg(2+) binding. Residues 103–123 form a disordered region; that stretch reads RKQEAAEQHEEAKETGTTEDV. Residues 122–253 are I-domain; sequence DVEKFSRRTV…NTALKLIRDH (132 aa). Positions 158, 160, 179, and 181 each coordinate Mg(2+). A DNA-binding site is contributed by Glu-158. Gly-231 and Asp-233 together coordinate DNA. Residue Asp-233 coordinates Mg(2+). Residues 341–349 form an interaction with PCNA region; that stretch reads QQSRLEGFF. Positions 356-389 are enriched in basic and acidic residues; sequence DEEKASLKRKHEEKLEAAKKKKKEDAKAKREAKS. The disordered stretch occupies residues 356–395; the sequence is DEEKASLKRKHEEKLEAAKKKKKEDAKAKREAKSRPKGTA.

This sequence belongs to the XPG/RAD2 endonuclease family. FEN1 subfamily. In terms of assembly, interacts with PCNA. Three molecules of FEN1 bind to one PCNA trimer with each molecule binding to one PCNA monomer. PCNA stimulates the nuclease activity without altering cleavage specificity. Requires Mg(2+) as cofactor. In terms of processing, phosphorylated. Phosphorylation upon DNA damage induces relocalization to the nuclear plasma.

Its subcellular location is the nucleus. The protein localises to the nucleolus. It is found in the nucleoplasm. It localises to the mitochondrion. In terms of biological role, structure-specific nuclease with 5'-flap endonuclease and 5'-3' exonuclease activities involved in DNA replication and repair. During DNA replication, cleaves the 5'-overhanging flap structure that is generated by displacement synthesis when DNA polymerase encounters the 5'-end of a downstream Okazaki fragment. It enters the flap from the 5'-end and then tracks to cleave the flap base, leaving a nick for ligation. Also involved in the long patch base excision repair (LP-BER) pathway, by cleaving within the apurinic/apyrimidinic (AP) site-terminated flap. Acts as a genome stabilization factor that prevents flaps from equilibrating into structures that lead to duplications and deletions. Also possesses 5'-3' exonuclease activity on nicked or gapped double-stranded DNA, and exhibits RNase H activity. Also involved in replication and repair of rDNA and in repairing mitochondrial DNA. This chain is Flap endonuclease 1, found in Uncinocarpus reesii (strain UAMH 1704).